The primary structure comprises 164 residues: UPF0114 protein Avin_40830 (164 aa).

Transmembrane regions (helical) follow at residues 15-35 (LLAP…LKFF), 53-73 (LILV…LVMV), 103-125 (GSLK…LRVF), and 136-156 (LLWY…MSYL).

Belongs to the UPF0114 family.

It localises to the cell membrane. This Azotobacter vinelandii (strain DJ / ATCC BAA-1303) protein is UPF0114 protein Avin_40830.